Here is a 575-residue protein sequence, read N- to C-terminus: MQPTAPPRRRLLPLLLPQLLLFGLMAEAEPATETPGSASVDTVFTARAGAPVFLPGPAARPDVRAVRGWSVLAGACSPPVPEPVCLDDRECFTDVALDAACLRTARVAPLAIAELAERPDSTGDKEFVLADPHVSAQLGRNATGVLIAAAAEEDGGVYFLYDRLIGDAGDEETQLALTLQVATAGAQGAARDEEREPATGPTPGPPPHRTTTRAPPRRHGARFRVLPYHSHVYTPGDSFLLSVRLQSEFFDEAPFSASIDWYFLRTAGDCALIRIYETCIFHPEAPACLHPADAQCSFASPYRSETVYSRLYEQCRPDPAGRWPHECEGAAYAAPVAHLRPANNSVDLVFDDAPAAASGLYVFVLQYNGHVEAWDYSLVVTSDRLVRAVTDHTRPEAAAADAPEPGPPLTSEPAGAPTGPAPWLVVLVGALGLAGLVGIAALAVRVCARRASQKRTYDILNPFGPVYTSLPTNEPLDVVVPVSDDEFSLDEDSFADDDSDDDGPASNPPADAYDLAGAPEPTSGFARAPANGTRSSRSGFKVWFRDPPEDDAAPARAPAAPDYTVVAARLKSILR.

The first 26 residues, Met1–Ala26, serve as a signal peptide directing secretion. At Glu27–Trp423 the chain is on the virion surface side. An interaction with gI region spans residues Cys76–Cys101. N-linked (GlcNAc...) asparagine; by host glycosylation is present at Asn141. Residues Ala186 to Arg218 form a disordered region. 3 disulfides stabilise this stretch: Cys270–Cys296, Cys279–Cys288, and Cys315–Cys327. Residue Asn343 is glycosylated (N-linked (GlcNAc...) asparagine; by host). The interval Arg394–Ala416 is disordered. The helical transmembrane segment at Leu424 to Val444 threads the bilayer. Over Arg445–Arg575 the chain is Intravirion. Positions Tyr467 to Leu470 match the Internalization motif motif. Residues Asp484–Asp502 form an acidic region. Residues Glu491–Gly503 show a composition bias toward acidic residues. Residues Glu491–Ala560 form a disordered region.

This sequence belongs to the alphaherpesvirinae glycoprotein E family. In terms of assembly, interacts with gI. Post-translationally, phosphorylated on serines within the acidic cluster. Phosphorylation determines whether endocytosed viral gE traffics to the trans-Golgi network or recycles to the cell membrane.

It localises to the virion membrane. It is found in the host cell membrane. The protein resides in the host cell junction. Its subcellular location is the host Golgi apparatus membrane. The protein localises to the host endosome membrane. Its function is as follows. In epithelial cells, the heterodimer gE/gI is required for the cell-to-cell spread of the virus, by sorting nascent virions to cell junctions. Once the virus reaches the cell junctions, virus particles can spread to adjacent cells extremely rapidly through interactions with cellular receptors that accumulate at these junctions. Implicated in basolateral spread in polarized cells. In neuronal cells, gE/gI is essential for the anterograde spread of the infection throughout the host nervous system. Together with US9, the heterodimer gE/gI is involved in the sorting and transport of viral structural components toward axon tips. This Bos taurus (Bovine) protein is Envelope glycoprotein E (gE).